Reading from the N-terminus, the 38-residue chain is Photosystem II reaction center protein Y (38 aa).

A helical transmembrane segment spans residues 4–22 (TIVVFAPIIAALAWVVFNI).

It belongs to the PsbY family. PSII is composed of 1 copy each of membrane proteins PsbA, PsbB, PsbC, PsbD, PsbE, PsbF, PsbH, PsbI, PsbJ, PsbK, PsbL, PsbM, PsbT, PsbX, PsbY, Psb30/Ycf12, peripheral proteins PsbO, CyanoQ (PsbQ), PsbU, PsbV and a large number of cofactors. It forms dimeric complexes.

It is found in the cellular thylakoid membrane. In terms of biological role, loosely associated component of the core of photosystem II (PSII), it is not always seen in crystals. PSII is a light-driven water plastoquinone oxidoreductase, using light energy to abstract electrons from H(2)O, generating a proton gradient subsequently used for ATP formation. The protein is Photosystem II reaction center protein Y of Prochlorococcus marinus (strain MIT 9215).